The chain runs to 171 residues: Large ribosomal subunit protein bL9 (171 aa).

The protein belongs to the bacterial ribosomal protein bL9 family.

Functionally, binds to the 23S rRNA. This chain is Large ribosomal subunit protein bL9, found in Rickettsia felis (strain ATCC VR-1525 / URRWXCal2) (Rickettsia azadi).